A 573-amino-acid chain; its full sequence is ATP-dependent RNA helicase RhlB (573 aa).

Positions 9–37 (VTFSSFDLHPALIAGLESAGFTRCTPIQA) match the Q motif motif. A Helicase ATP-binding domain is found at 40 to 220 (LPVALPGGDV…YEHMNEPEKL (181 aa)). An ATP-binding site is contributed by 53–60 (AQTGTGKT). The short motif at 166–169 (DEAD) is the DEAD box element. Residues 231 to 393 (RVRQRIYFPS…PVTSELLTPL (163 aa)) enclose the Helicase C-terminal domain. Positions 391–560 (TPLPRAPRVP…KPSGSPSLLS (170 aa)) are disordered. Positions 402-411 (EGEEADDDAG) are enriched in acidic residues. The segment covering 419–432 (REAREQRAAEEQRR) has biased composition (basic and acidic residues). A compositionally biased stretch (gly residues) spans 435-450 (GRSGSGGSRSGSGGGG). The span at 451-462 (GRREGAGADGKP) shows a compositional bias: basic and acidic residues. Positions 484–499 (PVVAAAAGQAPSAGVA) are enriched in low complexity. Basic residues predominate over residues 505-514 (PRKRRRRRNG). Positions 541 to 560 (VVAKPVRAAAKPSGSPSLLS) are enriched in low complexity.

Belongs to the DEAD box helicase family. RhlB subfamily. In terms of assembly, component of the RNA degradosome, which is a multiprotein complex involved in RNA processing and mRNA degradation.

The protein localises to the cytoplasm. The enzyme catalyses ATP + H2O = ADP + phosphate + H(+). Its function is as follows. DEAD-box RNA helicase involved in RNA degradation. Has RNA-dependent ATPase activity and unwinds double-stranded RNA. This is ATP-dependent RNA helicase RhlB from Xanthomonas euvesicatoria pv. vesicatoria (strain 85-10) (Xanthomonas campestris pv. vesicatoria).